Consider the following 404-residue polypeptide: Probable protein phosphatase 2C 30 (404 aa).

Residues 42 to 52 are compositionally biased toward basic and acidic residues; the sequence is AERGAEEETSG. The interval 42 to 72 is disordered; sequence AERGAEEETSGKRRRLDGGGGEASTDEEDRE. Residues 77 to 399 form the PPM-type phosphatase domain; it reads RYGFTSVCGR…DNVSVVVVNL (323 aa). Residues Asp111, Gly112, and Asp298 each contribute to the Mn(2+) site. The interval 321-369 is disordered; that stretch reads GRRERNRSSPTSNLSPRQSSSSGDEAPNDGAPSAAAGSESDEESAAEED. Polar residues predominate over residues 330 to 343; that stretch reads PTSNLSPRQSSSSG. Asp390 serves as a coordination point for Mn(2+).

The protein belongs to the PP2C family. As to quaternary structure, interacts with PYL5 and SAPK2. Binding to PYL5 is dependent on the presence of abscisic acid (ABA). Interacts with PYL3, PYL5 and PYL9. Binding to PYL5 and PYL9 is dependent on the presence of ABA. Mg(2+) serves as cofactor. Requires Mn(2+) as cofactor.

The protein localises to the nucleus. It catalyses the reaction O-phospho-L-seryl-[protein] + H2O = L-seryl-[protein] + phosphate. The enzyme catalyses O-phospho-L-threonyl-[protein] + H2O = L-threonyl-[protein] + phosphate. Functionally, together with ABI5, PYL5 and SAPK2, is part of an abscisic acid (ABA) signaling unit that modulates seed germination and early seedling growth. In Oryza sativa subsp. japonica (Rice), this protein is Probable protein phosphatase 2C 30.